The chain runs to 221 residues: F-box protein At1g55000 (221 aa).

In terms of domain architecture, F-box spans 7-46 (DTLIIIFQKLTVADLARASCVCKVWNSVATEDDLVVSAFT). The LysM domain maps to 74-118 (ISHRICRGDSVTSLAVKYAVQVMDIKRLNNMMSDHGIYSRDRLLI).

Part of a SCF (ASK-cullin-F-box) protein ligase complex. Interacts with SKP1A/ASK1, SKP1B/ASK2, ASK4, ASK11 and ASK13.

It participates in protein modification; protein ubiquitination. Component of SCF(ASK-cullin-F-box) E3 ubiquitin ligase complexes, which may mediate the ubiquitination and subsequent proteasomal degradation of target proteins. The polypeptide is F-box protein At1g55000 (Arabidopsis thaliana (Mouse-ear cress)).